The chain runs to 440 residues: C-terminal-binding protein 1 (440 aa).

Positions 1-70 are interaction with GLIS2 1; it reads MGSSHLLNKG…EIHEKVLNEA (70 aa). Residues serine 100, 180–185, aspartate 204, 237–243, 264–266, and aspartate 290 contribute to the NAD(+) site; these read IGLGRV, CGLNEHN, and TAR. Arginine 266 is a catalytic residue. Residues 288–360 are interaction with GLIS2 2; sequence ALDVHESEPF…VNKDHLTAAT (73 aa). Glutamate 295 is a catalytic residue. Serine 300 is modified (phosphoserine). The Proton donor role is filled by histidine 315. 315 to 318 lines the NAD(+) pocket; the sequence is HAAW. Positions 408 to 440 are disordered; it reads SHGLPPVAHPPHAPSPGQTVKPEADRDHASDQL. Serine 422 is modified (phosphoserine; by HIPK2). A Glycyl lysine isopeptide (Lys-Gly) (interchain with G-Cter in SUMO) cross-link involves residue lysine 428. Positions 429–440 are enriched in basic and acidic residues; sequence PEADRDHASDQL.

This sequence belongs to the D-isomer specific 2-hydroxyacid dehydrogenase family. Homo- or heterodimer. Heterodimer with CTBP2. Interacts with PRDM16; the interaction represses white adipose tissue (WAT)-specific genes expression. Interacts with GLIS2, FOXP2, HDAC4, HDAC5, HDAC9 and ZNF217. Interacts with ELK3 (via its PXDLS motif). Interacts with RBBP8 (via its PXDLS motif); the interaction is disrupted by binding to adenovirus E1A. Interacts with FOXP1, HIPK2, PNN, NRIP1, MECOM, ZFHX1B and WIZ. Interacts with ZNF366 (via PXDLS motif). Interaction with SATB1 (non-acetylated form); the interaction stabilizes its attachment to DNA and promotes transcription repression. Interacts with BCL6; the interaction is required for BCL6 transcriptional autoinhibition and inhibition of some BCL6 target genes. Interacts with IKZF4. Interacts with MCRIP1 (unphosphorylated form, via the PXDLS motif); competitively inhibiting CTBP-ZEB1 interaction. Interacts with Bassoon/BSN; this interaction targets and anchors CTBP1 to presynapses. Interacts with SIMC1. As to quaternary structure, (Microbial infection) Interacts with Epstein-Barr virus EBNA3. Interacts with Epstein-Barr virus EBNA6; this interaction leads to gene repression, but also seems to interfere with the repressive function of CtBP pre-bound to DNA, leading to EBNA6 mediated up-regulation of many cellular genes. In terms of assembly, (Microbial infection) Interacts with adenovirus E1A protein (via its C-terminus); the interaction disrupts the interaction of CTBP1 with RBBP8. (Microbial infection) Interacts with human adenovirus 5 E1A protein; this interaction seems to potentiate viral replication. It depends on NAD(+) as a cofactor. Post-translationally, the level of phosphorylation appears to be regulated during the cell cycle. Phosphorylation by HIPK2 on Ser-422 induces proteasomal degradation. ADP-ribosylated; when cells are exposed to brefeldin A. In terms of processing, sumoylation on Lys-428 is promoted by the E3 SUMO-protein ligase CBX4. As to expression, expressed in germinal center B-cells.

Its subcellular location is the cytoplasm. The protein resides in the nucleus. In terms of biological role, corepressor targeting diverse transcription regulators such as GLIS2 or BCL6. Has dehydrogenase activity. Involved in controlling the equilibrium between tubular and stacked structures in the Golgi complex. Functions in brown adipose tissue (BAT) differentiation. The chain is C-terminal-binding protein 1 (CTBP1) from Homo sapiens (Human).